The following is a 32-amino-acid chain: Lectin (32 aa).

This sequence belongs to the leguminous lectin family. In terms of assembly, homotetramer.

In terms of biological role, metalloglycoprotein, containing Ca, Mg, Mn, and Zn and the carbohydrates galactose, glucosamine, mannose, and fucose. It agglutinates erythrocytes of blood group A1. The polypeptide is Lectin (Macrotyloma axillare (Perennial horse gram)).